The primary structure comprises 117 residues: Modulator protein MzrA (117 aa).

The Cytoplasmic segment spans residues 1-9 (MNSPGLRKP). Residues 10–29 (TIWRPLLLLFPLLALLLSMS) form a helical membrane-spanning segment. Residues 30–117 (SPRLPDEVML…THGTIRVARS (88 aa)) lie on the Periplasmic side of the membrane.

It belongs to the MzrA family. Interacts with EnvZ.

The protein resides in the cell inner membrane. Functionally, modulates the activity of the EnvZ/OmpR two-component regulatory system, probably by directly modulating EnvZ enzymatic activity and increasing stability of phosphorylated OmpR. This Dickeya zeae (strain Ech586) (Dickeya dadantii (strain Ech586)) protein is Modulator protein MzrA.